The primary structure comprises 230 residues: 7-cyano-7-deazaguanine synthase (230 aa).

14 to 24 (LSGGLDSTTTL) lines the ATP pocket. Residues C194, C204, C207, and C210 each coordinate Zn(2+).

Belongs to the QueC family. Requires Zn(2+) as cofactor.

It catalyses the reaction 7-carboxy-7-deazaguanine + NH4(+) + ATP = 7-cyano-7-deazaguanine + ADP + phosphate + H2O + H(+). It functions in the pathway purine metabolism; 7-cyano-7-deazaguanine biosynthesis. In terms of biological role, catalyzes the ATP-dependent conversion of 7-carboxy-7-deazaguanine (CDG) to 7-cyano-7-deazaguanine (preQ(0)). The chain is 7-cyano-7-deazaguanine synthase from Ruthia magnifica subsp. Calyptogena magnifica.